The following is a 97-amino-acid chain: Co-chaperonin GroES (97 aa).

The protein belongs to the GroES chaperonin family. Heptamer of 7 subunits arranged in a ring. Interacts with the chaperonin GroEL.

The protein resides in the cytoplasm. Together with the chaperonin GroEL, plays an essential role in assisting protein folding. The GroEL-GroES system forms a nano-cage that allows encapsulation of the non-native substrate proteins and provides a physical environment optimized to promote and accelerate protein folding. GroES binds to the apical surface of the GroEL ring, thereby capping the opening of the GroEL channel. In Ectopseudomonas mendocina (strain ymp) (Pseudomonas mendocina), this protein is Co-chaperonin GroES.